A 233-amino-acid chain; its full sequence is Cytidylate kinase (233 aa).

Residue 15-23 (GPSGAGKSS) participates in ATP binding.

Belongs to the cytidylate kinase family. Type 1 subfamily.

The protein localises to the cytoplasm. It carries out the reaction CMP + ATP = CDP + ADP. It catalyses the reaction dCMP + ATP = dCDP + ADP. This chain is Cytidylate kinase, found in Citrifermentans bemidjiense (strain ATCC BAA-1014 / DSM 16622 / JCM 12645 / Bem) (Geobacter bemidjiensis).